A 425-amino-acid polypeptide reads, in one-letter code: Adenylosuccinate synthetase (425 aa).

GTP-binding positions include G12–K18 and G40–T42. The active-site Proton acceptor is the D13. Residues D13 and G40 each contribute to the Mg(2+) site. Residues D13 to K16, N38 to H41, T130, R144, Q225, T240, and R304 contribute to the IMP site. H41 serves as the catalytic Proton donor. A300 to R306 contributes to the substrate binding site. Residues R306, K332–D334, and S414–G416 each bind GTP.

This sequence belongs to the adenylosuccinate synthetase family. Homodimer. Requires Mg(2+) as cofactor.

Its subcellular location is the cytoplasm. The catalysed reaction is IMP + L-aspartate + GTP = N(6)-(1,2-dicarboxyethyl)-AMP + GDP + phosphate + 2 H(+). Its pathway is purine metabolism; AMP biosynthesis via de novo pathway; AMP from IMP: step 1/2. In terms of biological role, plays an important role in the de novo pathway of purine nucleotide biosynthesis. Catalyzes the first committed step in the biosynthesis of AMP from IMP. The chain is Adenylosuccinate synthetase from Desulfovibrio desulfuricans (strain ATCC 27774 / DSM 6949 / MB).